The sequence spans 271 residues: 3-methyl-2-oxobutanoate hydroxymethyltransferase (271 aa).

Mg(2+)-binding residues include aspartate 51 and aspartate 90. 3-methyl-2-oxobutanoate-binding positions include 51–52 (DS), aspartate 90, and lysine 119. Glutamate 121 is a Mg(2+) binding site. Residue glutamate 188 is the Proton acceptor of the active site.

The protein belongs to the PanB family. In terms of assembly, homodecamer; pentamer of dimers. Requires Mg(2+) as cofactor.

It is found in the cytoplasm. The enzyme catalyses 3-methyl-2-oxobutanoate + (6R)-5,10-methylene-5,6,7,8-tetrahydrofolate + H2O = 2-dehydropantoate + (6S)-5,6,7,8-tetrahydrofolate. The protein operates within cofactor biosynthesis; (R)-pantothenate biosynthesis; (R)-pantoate from 3-methyl-2-oxobutanoate: step 1/2. Catalyzes the reversible reaction in which hydroxymethyl group from 5,10-methylenetetrahydrofolate is transferred onto alpha-ketoisovalerate to form ketopantoate. The sequence is that of 3-methyl-2-oxobutanoate hydroxymethyltransferase from Aromatoleum aromaticum (strain DSM 19018 / LMG 30748 / EbN1) (Azoarcus sp. (strain EbN1)).